The chain runs to 790 residues: Valine--tRNA ligase (790 aa).

A 'HIGH' region motif is present at residues 40–50; the sequence is PTVSGKMHMGH. A 'KMSKS' region motif is present at residues 521–525; it reads KMSKS. K524 contacts ATP.

The protein belongs to the class-I aminoacyl-tRNA synthetase family. ValS type 2 subfamily.

The protein localises to the cytoplasm. The catalysed reaction is tRNA(Val) + L-valine + ATP = L-valyl-tRNA(Val) + AMP + diphosphate. In terms of biological role, catalyzes the attachment of valine to tRNA(Val). As ValRS can inadvertently accommodate and process structurally similar amino acids such as threonine, to avoid such errors, it has a 'posttransfer' editing activity that hydrolyzes mischarged Thr-tRNA(Val) in a tRNA-dependent manner. The polypeptide is Valine--tRNA ligase (Thermoplasma volcanium (strain ATCC 51530 / DSM 4299 / JCM 9571 / NBRC 15438 / GSS1)).